A 333-amino-acid chain; its full sequence is Electron transfer flavoprotein subunit alpha, mitochondrial (333 aa).

A mitochondrion-targeting transit peptide spans 1 to 19; it reads MFRAAAPGQLRRAASLLRF. The tract at residues 20–204 is domain I; that stretch reads QSTLVIAEHA…EISEWLDQKL (185 aa). Position 59 is an N6-acetyllysine; alternate (K59). The residue at position 59 (K59) is an N6-succinyllysine; alternate. At K62 the chain carries N6-acetyllysine. At K69 the chain carries N6-acetyllysine; alternate. K69 is modified (N6-succinyllysine; alternate). K75 is subject to N6-acetyllysine. K85 bears the N6-acetyllysine; alternate mark. Position 85 is an N6-succinyllysine; alternate (K85). Phosphothreonine is present on T93. 2 positions are modified to N6-acetyllysine: K101 and K139. At S140 the chain carries Phosphoserine. At K158 the chain carries N6-acetyllysine; alternate. Position 158 is an N6-succinyllysine; alternate (K158). K164 bears the N6-acetyllysine mark. K187 carries the post-translational modification N6-succinyllysine. Position 203 is an N6-acetyllysine; alternate (K203). At K203 the chain carries N6-succinyllysine; alternate. A domain II region spans residues 205–333; that stretch reads TKSDRPELTG…PEMTEILKKK (129 aa). K216 is subject to N6-succinyllysine. R223 is an FAD binding site. K226 and K232 each carry N6-acetyllysine; alternate. K226 and K232 each carry N6-succinyllysine; alternate. FAD is bound by residues S248, 263-266, 281-286, and N300; these read VGQT and SGAIQH. K301 is subject to N6-succinyllysine. 318–319 lines the FAD pocket; that stretch reads DL.

The protein belongs to the ETF alpha-subunit/FixB family. As to quaternary structure, heterodimer composed of ETFA and ETFB. Identified in a complex that contains ETFA, ETFB and ETFRF1. Interaction with ETFRF1 promotes dissociation of the bound FAD and loss of electron transfer activity. Interacts with TASOR. FAD serves as cofactor. The N-terminus is blocked.

The protein localises to the mitochondrion matrix. Heterodimeric electron transfer flavoprotein that accepts electrons from several mitochondrial dehydrogenases, including acyl-CoA dehydrogenases, glutaryl-CoA and sarcosine dehydrogenase. It transfers the electrons to the main mitochondrial respiratory chain via ETF-ubiquinone oxidoreductase (ETF dehydrogenase). Required for normal mitochondrial fatty acid oxidation and normal amino acid metabolism. The sequence is that of Electron transfer flavoprotein subunit alpha, mitochondrial (ETFA) from Homo sapiens (Human).